The following is a 694-amino-acid chain: Elongation factor G (694 aa).

Residues 8–287 enclose the tr-type G domain; sequence EDYRNFGIMA…AVVEFLPAPT (280 aa). GTP-binding positions include 17–24, 86–90, and 140–143; these read AHIDAGKT, DTPGH, and NKMD.

It belongs to the TRAFAC class translation factor GTPase superfamily. Classic translation factor GTPase family. EF-G/EF-2 subfamily.

The protein localises to the cytoplasm. Catalyzes the GTP-dependent ribosomal translocation step during translation elongation. During this step, the ribosome changes from the pre-translocational (PRE) to the post-translocational (POST) state as the newly formed A-site-bound peptidyl-tRNA and P-site-bound deacylated tRNA move to the P and E sites, respectively. Catalyzes the coordinated movement of the two tRNA molecules, the mRNA and conformational changes in the ribosome. The sequence is that of Elongation factor G from Brucella anthropi (strain ATCC 49188 / DSM 6882 / CCUG 24695 / JCM 21032 / LMG 3331 / NBRC 15819 / NCTC 12168 / Alc 37) (Ochrobactrum anthropi).